The primary structure comprises 296 residues: Glutamate 5-kinase (296 aa).

K15 contributes to the ATP binding site. Substrate contacts are provided by S55, D159, and N186. ATP is bound by residues S206 to D207 and T248 to K254.

The protein belongs to the glutamate 5-kinase family.

The protein localises to the cytoplasm. The catalysed reaction is L-glutamate + ATP = L-glutamyl 5-phosphate + ADP. It functions in the pathway amino-acid biosynthesis; L-proline biosynthesis; L-glutamate 5-semialdehyde from L-glutamate: step 1/2. Catalyzes the transfer of a phosphate group to glutamate to form L-glutamate 5-phosphate. The polypeptide is Glutamate 5-kinase (Treponema pallidum (strain Nichols)).